A 246-amino-acid chain; its full sequence is uncharacterized protein (246 aa).

This is an uncharacterized protein from Acidianus sp. F28 (AFV-2).